Consider the following 135-residue polypeptide: Large ribosomal subunit protein uL16 (135 aa).

Belongs to the universal ribosomal protein uL16 family. In terms of assembly, part of the 50S ribosomal subunit.

Its function is as follows. Binds 23S rRNA and is also seen to make contacts with the A and possibly P site tRNAs. This Carsonella ruddii (strain PV) protein is Large ribosomal subunit protein uL16 (rplP).